A 337-amino-acid polypeptide reads, in one-letter code: B3 domain-containing protein REM16 (337 aa).

2 consecutive DNA-binding regions (TF-B3) follow at residues 22 to 116 (TLHF…FDGQ) and 223 to 321 (FLVF…FRGE).

It localises to the nucleus. This is B3 domain-containing protein REM16 (REM16) from Arabidopsis thaliana (Mouse-ear cress).